Consider the following 171-residue polypeptide: MSKDMLVNDGIRAREVRLIDQDGEQLGVKSKIDALQIAEKANLDLVLVAPTAKPPVARIMDYGKFRFEQQKKDKEARKNQKVIVMKEVRLSPTIDEHDFDTKLRNARKFLEKGDKVKCSIRFKGRAITHKEIGQKVLDRFAKACEDLCTIEQRPKMDGRSMFLVLAPLHEK.

The protein belongs to the IF-3 family. In terms of assembly, monomer.

It is found in the cytoplasm. IF-3 binds to the 30S ribosomal subunit and shifts the equilibrium between 70S ribosomes and their 50S and 30S subunits in favor of the free subunits, thus enhancing the availability of 30S subunits on which protein synthesis initiation begins. The sequence is that of Translation initiation factor IF-3 from Listeria innocua serovar 6a (strain ATCC BAA-680 / CLIP 11262).